We begin with the raw amino-acid sequence, 150 residues long: Endoribonuclease YbeY (150 aa).

Zn(2+) is bound by residues His-112, His-116, and His-122.

The protein belongs to the endoribonuclease YbeY family. It depends on Zn(2+) as a cofactor.

It localises to the cytoplasm. Functionally, single strand-specific metallo-endoribonuclease involved in late-stage 70S ribosome quality control and in maturation of the 3' terminus of the 16S rRNA. This is Endoribonuclease YbeY from Geobacter metallireducens (strain ATCC 53774 / DSM 7210 / GS-15).